The sequence spans 344 residues: MSTSLSYRDAGVDIDAGDQLVENIKPFAKRTMRPEVLGDLGGFGALVEIGKKYKNPVLVSGTDGVGTKLKLAFDWDKHDTVGIDLVAMSVNDILVQGAEPLFFLDYFACGKLDVPRATDVIKGIAQGCEESGCALIGGETAEMPGMYPVGEYDLAGFAVGVVEKENVITGRSIGAGDVVLGLASNGAHSNGYSLIRKIIERDNPDLDAEFDNGKTLREAVIAPTRLYVKPILAALEKFTIKGMAHITGGGITENVPRVLPENTVAQIDAKSWELPKLFQWLQKAGNVETQEMYRTFNCGIGMVVIVAAEDADAVQGLLGEQGETVYRLGLIRERQGDEHQTQVA.

This sequence belongs to the AIR synthase family.

The protein localises to the cytoplasm. The enzyme catalyses 2-formamido-N(1)-(5-O-phospho-beta-D-ribosyl)acetamidine + ATP = 5-amino-1-(5-phospho-beta-D-ribosyl)imidazole + ADP + phosphate + H(+). The protein operates within purine metabolism; IMP biosynthesis via de novo pathway; 5-amino-1-(5-phospho-D-ribosyl)imidazole from N(2)-formyl-N(1)-(5-phospho-D-ribosyl)glycinamide: step 2/2. This is Phosphoribosylformylglycinamidine cyclo-ligase from Neisseria meningitidis serogroup C (strain 053442).